A 257-amino-acid chain; its full sequence is UPF0246 protein Sputcn32_1053 (257 aa).

Belongs to the UPF0246 family.

The polypeptide is UPF0246 protein Sputcn32_1053 (Shewanella putrefaciens (strain CN-32 / ATCC BAA-453)).